Here is a 185-residue protein sequence, read N- to C-terminus: Ribosome-recycling factor (185 aa).

This sequence belongs to the RRF family.

The protein localises to the cytoplasm. Responsible for the release of ribosomes from messenger RNA at the termination of protein biosynthesis. May increase the efficiency of translation by recycling ribosomes from one round of translation to another. The protein is Ribosome-recycling factor of Bacillus mycoides (strain KBAB4) (Bacillus weihenstephanensis).